The primary structure comprises 862 residues: Rab GTPase-binding effector protein 1 (862 aa).

A2 bears the N-acetylalanine mark. The stretch at 11-328 (DVSLQQRVAE…KDQEEDEQQR (318 aa)) forms a coiled coil. N6-acetyllysine is present on K282. 2 disordered regions span residues 315–340 (ELKKKDQEEDEQQRINKGKDNKKIDT) and 355–374 (EESSTPLSNEEEHLDSTHGS). Phosphoserine is present on residues S374, S377, and S407. At T408 the chain carries Phosphothreonine. Phosphoserine is present on S410. Positions 534–816 (DMCSNYEKQL…LQTELDVSEQ (283 aa)) form a coiled coil.

The protein belongs to the rabaptin family. In terms of assembly, heterodimer with RABGEF1. The heterodimer binds RAB4A and RAB5A that have been activated by GTP-binding. Interacts with TSC2. Interacts with GGA1 (via GAE domain), GGA2 (via GAE domain) and GGA3 (via GAE domain). Interacts with AP1G1 (via GAE domain). Interacts with AP1G2 (via GAE domain). Interacts with ECPAS. Interacts with KCNH1. Interacts with PKD1 (via C-terminal domain) and GGA1; the interactions recruit PKD1:PKD2 complex to GGA1 and ARL3 at trans-Golgi network. Interacts with KCNH1. In terms of processing, proteolytic cleavage by caspases in apoptotic cells causes loss of endosome fusion activity.

The protein localises to the cytoplasm. It localises to the early endosome. It is found in the recycling endosome. The protein resides in the cytoplasmic vesicle. Its function is as follows. Rab effector protein acting as linker between gamma-adaptin, RAB4A and RAB5A. Involved in endocytic membrane fusion and membrane trafficking of recycling endosomes. Involved in KCNH1 channels trafficking to and from the cell membrane. Stimulates RABGEF1 mediated nucleotide exchange on RAB5A. Mediates the traffic of PKD1:PKD2 complex from the endoplasmic reticulum through the Golgi to the cilium. In Rattus norvegicus (Rat), this protein is Rab GTPase-binding effector protein 1 (Rabep1).